The chain runs to 360 residues: MGRSPCCDQDKGVKKGPWLPEEDDKLTAYINENGYGNWRSLPKLAGLNRCGKSCRLRWMNYLRPDIRRGKFSDGEESTIVRLHALLGNKWSKIAGHLPGRTDNEIKNYWNTHMRKKLLQMGIDPVTHEPRTNDLSPILDVSQMLAAAINNGQFGNNNLLNNNTALEDILKLQLIHKMLQIITPKAIPNISSFKTNLLNPKPEPVVNSFNTNSVNPKPDPPAGLFINQSGITPEAASDFIPSYENVWDGFEDNQLPGLVTVSQESLNTAKPGTSTTTKVNDHIRTGMMPCYYGDQLLETPSTGSVSVSPETTSLNHPSTAQHSSGSDFLEDWEKFLDDETSDSCWKSFLDLTSPTSSPVPW.

HTH myb-type domains are found at residues aspartate 10–leucine 62 and arginine 63–leucine 117. 2 consecutive DNA-binding regions (H-T-H motif) follow at residues tryptophan 38–leucine 62 and tryptophan 90–methionine 113. The segment at proline 299–glycine 324 is disordered.

The protein localises to the nucleus. This is Transcription factor MYB39 (MYB39) from Arabidopsis thaliana (Mouse-ear cress).